The primary structure comprises 368 residues: Glutamate 5-kinase (368 aa).

Residue lysine 9 coordinates ATP. Residues serine 49, aspartate 136, and asparagine 148 each coordinate substrate. Residues 168-169 and 210-216 contribute to the ATP site; these read TD and TGGMMTK. The PUA domain occupies 275-353; sequence AGIITIDDGA…ADIENVLGYE (79 aa).

It belongs to the glutamate 5-kinase family.

It is found in the cytoplasm. It catalyses the reaction L-glutamate + ATP = L-glutamyl 5-phosphate + ADP. It participates in amino-acid biosynthesis; L-proline biosynthesis; L-glutamate 5-semialdehyde from L-glutamate: step 1/2. Catalyzes the transfer of a phosphate group to glutamate to form L-glutamate 5-phosphate. This chain is Glutamate 5-kinase, found in Haemophilus influenzae (strain 86-028NP).